We begin with the raw amino-acid sequence, 604 residues long: Arginine--tRNA ligase (604 aa).

The short motif at 142-152 is the 'HIGH' region element; sequence PNIAKEMHVGH.

It belongs to the class-I aminoacyl-tRNA synthetase family. Monomer.

The protein localises to the cytoplasm. It catalyses the reaction tRNA(Arg) + L-arginine + ATP = L-arginyl-tRNA(Arg) + AMP + diphosphate. The chain is Arginine--tRNA ligase from Prochlorococcus marinus (strain MIT 9312).